Here is a 198-residue protein sequence, read N- to C-terminus: Putative nitroreductase MJ1384 (198 aa).

It belongs to the nitroreductase family. Requires FMN as cofactor.

The protein is Putative nitroreductase MJ1384 of Methanocaldococcus jannaschii (strain ATCC 43067 / DSM 2661 / JAL-1 / JCM 10045 / NBRC 100440) (Methanococcus jannaschii).